Reading from the N-terminus, the 1196-residue chain is METKPKTATTIKVPPGPLGYVYARACPSEGIELLALLSARSGDSDVAVAPLVVGLTVESGFEANVAVVVGSRTTGLGGTAVSLKLTPSHYSSSVYVFHGGRHLDPSTQAPNLTRLCERARRHFGFSDYTPRPGDLKHETTGEALCERLGLDPDRALLYLVVTEGFKEAVSINNTFLHLGGSDKVTIGGAEVHRIPVYPLQLFMPDFSRVIAEPFNANHRSIGEKFTYPLPFFNRPLNRLLFEAVVGPAAVALRCRNVDAVARAAAHLAFDENHEGAALPADITFTAFEASQGKTPRGERDGGGKGAAGGFEQRLASVMAGDAALALESIVSMAVFDEPPTDISAWPLFEGQDTAAARANAVGAYLARAAGLVGAMVFSTNSALHLTEVDDAGPADPKDHSKPSFYRFFLVPGTHVAANPQVDREGHVVPGFEGRPTAPLVGGTQEFAGEHLAMLCGFSPALLAKMLFYLERCDGAVIVGRQEMDVFRYVADSNQTDVPCNLCTFDTRHACVHTTLMRLRARHPKFASAARGAIGVFGTMNSMYSDCDVLGNYAAFSALKRADGSETARTIMQETYRAATERVMAELETLQYVDQAVPTAMGRLETIITNREALHTVVNNVRQVVDREVEQLMRNLVEGRNFKFRDGLGEANHAMSLTLDPYACGPCPLLQLLGRRSNLAVYQDLALSQCHGVFAGQSVEGRNFRNQFQPVLRRRVMDMFNNGFLSAKTLTVALSEGAAICAPSLTAGQTAPAESSFEGDVARVTLGFPKELRVKSRVLFAGASANASEAAKARVASLQSAYQKPDKRVDILLGPLGFLLKQFHAAIFPNGKPPGSNQPNPQWFWTALQRNQLPARLLSREDIETIAFIKKFSLDYGAINFINLAPNNVSELAMYYMANQILRYCDHSTYFINTLTAIIAGSRRPPSVQAAAAWSAQGGAGLEAGARALVDAVDAHPGAWTSMFASCNLLRPVMAARPMVVLGLSISKYYGMAGNDRVFQAGNWASLMGGKNACPLLIFDRTRKFVLACPRAGFVCAASSLGGGAHESSLCEQLRGIISEGGAAVASSVFVATVKSLGPRTQQLQIEDWLALLEDEYLSEEMMELTARALERGNGEWSTDAALEVAHEAEALVSQLGNAGEVFNFGDFGCEDDNATPFGGPGAPGPAFAGRKRAFHGDDPFGEGPPDKKGDLTLDML.

A zinc finger lies at 499 to 512; sequence CNLCTFDTRHACVH. 2 consecutive short sequence motifs (required for filament formation) follow at residues 843-844 and 1142-1144; these read FW and FNF. The segment at 1158-1196 is disordered; it reads GGPGAPGPAFAGRKRAFHGDDPFGEGPPDKKGDLTLDML. Positions 1170 to 1196 are required for nuclear localization; that stretch reads RKRAFHGDDPFGEGPPDKKGDLTLDML. Basic and acidic residues predominate over residues 1174–1196; the sequence is FHGDDPFGEGPPDKKGDLTLDML.

It belongs to the herpesviridae major DNA-binding protein family. As to quaternary structure, homooligomers. Forms double-helical filaments necessary for the formation of replication compartments within the host nucleus. Interacts with the origin-binding protein. Interacts with the helicase primase complex; this interaction stimulates primer synthesis activity of the helicase-primase complex. Interacts with the DNA polymerase. Interacts with the alkaline exonuclease; this interaction increases its nuclease processivity.

The protein localises to the host nucleus. In terms of biological role, plays several crucial roles in viral infection. Participates in the opening of the viral DNA origin to initiate replication by interacting with the origin-binding protein. May disrupt loops, hairpins and other secondary structures present on ssDNA to reduce and eliminate pausing of viral DNA polymerase at specific sites during elongation. Promotes viral DNA recombination by performing strand-transfer, characterized by the ability to transfer a DNA strand from a linear duplex to a complementary single-stranded DNA circle. Can also catalyze the renaturation of complementary single strands. Additionally, reorganizes the host cell nucleus, leading to the formation of prereplicative sites and replication compartments. This process is driven by the protein which can form double-helical filaments in the absence of DNA. The chain is Major DNA-binding protein from Homo sapiens (Human).